The following is a 391-amino-acid chain: Phosphoglycerate kinase (391 aa).

Residues 21 to 23, R36, 59 to 62, R114, and R147 each bind substrate; these read DLN and HLGR. ATP-binding positions include K198, E315, and 344 to 347; that span reads GGDT.

It belongs to the phosphoglycerate kinase family. Monomer.

The protein resides in the cytoplasm. The catalysed reaction is (2R)-3-phosphoglycerate + ATP = (2R)-3-phospho-glyceroyl phosphate + ADP. The protein operates within carbohydrate degradation; glycolysis; pyruvate from D-glyceraldehyde 3-phosphate: step 2/5. This chain is Phosphoglycerate kinase, found in Actinobacillus pleuropneumoniae serotype 5b (strain L20).